The sequence spans 185 residues: Large ribosomal subunit protein bL25 (185 aa).

The protein belongs to the bacterial ribosomal protein bL25 family. CTC subfamily. In terms of assembly, part of the 50S ribosomal subunit; part of the 5S rRNA/L5/L18/L25 subcomplex. Contacts the 5S rRNA. Binds to the 5S rRNA independently of L5 and L18.

This is one of the proteins that binds to the 5S RNA in the ribosome where it forms part of the central protuberance. In Chlamydia pneumoniae (Chlamydophila pneumoniae), this protein is Large ribosomal subunit protein bL25.